Reading from the N-terminus, the 77-residue chain is Acyl carrier protein (77 aa).

The 76-residue stretch at 1 to 76 (MATFDDVKAV…DVVNYIDNLK (76 aa)) folds into the Carrier domain. Position 36 is an O-(pantetheine 4'-phosphoryl)serine (Ser-36).

Belongs to the acyl carrier protein (ACP) family. 4'-phosphopantetheine is transferred from CoA to a specific serine of apo-ACP by AcpS. This modification is essential for activity because fatty acids are bound in thioester linkage to the sulfhydryl of the prosthetic group.

The protein localises to the cytoplasm. Its pathway is lipid metabolism; fatty acid biosynthesis. Carrier of the growing fatty acid chain in fatty acid biosynthesis. This is Acyl carrier protein from Campylobacter jejuni subsp. jejuni serotype O:6 (strain 81116 / NCTC 11828).